A 264-amino-acid polypeptide reads, in one-letter code: Merozoite surface protein 2 (264 aa).

The signal sequence occupies residues methionine 1–isoleucine 20. 2 N-linked (GlcNAc...) asparagine glycosylation sites follow: asparagine 22 and asparagine 36. Residues alanine 44–alanine 190 form a polymorphic region region. The tract at residues glutamate 46–asparagine 225 is disordered. A run of 2 repeats spans residues alanine 60–alanine 91 and alanine 92–alanine 123. The segment at alanine 60–alanine 123 is 2 X 32 AA perfects repeats. Positions serine 70–asparagine 81 are enriched in low complexity. A compositionally biased stretch (polar residues) spans glycine 82–arginine 101. The span at serine 102–serine 145 shows a compositional bias: low complexity. Residue asparagine 152 is glycosylated (N-linked (GlcNAc...) asparagine). Positions threonine 154–glutamate 166 are enriched in basic and acidic residues. N-linked (GlcNAc...) asparagine glycosylation is found at asparagine 168 and asparagine 213. A disulfide bond links cysteine 221 and cysteine 229. Asparagine 237 and asparagine 238 each carry an N-linked (GlcNAc...) asparagine glycan. Asparagine 238 carries the GPI-anchor amidated asparagine lipid modification. A propeptide spans serine 239–isoleucine 264 (removed in mature form).

The protein resides in the cell membrane. May play a role in the merozoite attachment to the erythrocyte. In Plasmodium falciparum (isolate fid3 / India), this protein is Merozoite surface protein 2.